The primary structure comprises 447 residues: Trigger factor (447 aa).

Residues 174-261 (GDIAVLGFKG…LKDLKTRELP (88 aa)) form the PPIase FKBP-type domain.

Belongs to the FKBP-type PPIase family. Tig subfamily.

Its subcellular location is the cytoplasm. The enzyme catalyses [protein]-peptidylproline (omega=180) = [protein]-peptidylproline (omega=0). Functionally, involved in protein export. Acts as a chaperone by maintaining the newly synthesized protein in an open conformation. Functions as a peptidyl-prolyl cis-trans isomerase. This is Trigger factor from Synechococcus sp. (strain CC9902).